A 151-amino-acid chain; its full sequence is Apolipoprotein A-I (151 aa).

The signal sequence occupies residues methionine 1–alanine 18. Positions arginine 19–glutamine 24 are excised as a propeptide. A run of 2 repeats spans residues leucine 67–glycine 88 and proline 89–serine 110. The interval leucine 67 to alanine 143 is 4 X approximate tandem repeats. Methionine 109 bears the Methionine sulfoxide mark. The stretch at lysine 111–glutamine 121 is one 3; half-length repeat. The stretch at proline 122–alanine 143 is repeat 4.

The protein belongs to the apolipoprotein A1/A4/E family. Homodimer. Interacts with APOA1BP and CLU. Component of a sperm activating protein complex (SPAP), consisting of APOA1, an immunoglobulin heavy chain, an immunoglobulin light chain and albumin. Interacts with NDRG1. Interacts with SCGB3A2. Interacts with NAXE and YJEFN3. In terms of processing, glycosylated. Post-translationally, palmitoylated. Phosphorylation sites are present in the extracellular medium. Major protein of plasma HDL, also found in chylomicrons.

It is found in the secreted. Participates in the reverse transport of cholesterol from tissues to the liver for excretion by promoting cholesterol efflux from tissues and by acting as a cofactor for the lecithin cholesterol acyltransferase (LCAT). As part of the SPAP complex, activates spermatozoa motility. The chain is Apolipoprotein A-I (APOA1) from Panthera tigris altaica (Siberian tiger).